The following is a 136-amino-acid chain: ATP synthase epsilon chain (136 aa).

It belongs to the ATPase epsilon chain family. In terms of assembly, F-type ATPases have 2 components, CF(1) - the catalytic core - and CF(0) - the membrane proton channel. CF(1) has five subunits: alpha(3), beta(3), gamma(1), delta(1), epsilon(1). CF(0) has three main subunits: a, b and c.

It localises to the cell inner membrane. Its function is as follows. Produces ATP from ADP in the presence of a proton gradient across the membrane. This chain is ATP synthase epsilon chain, found in Hydrogenobaculum sp. (strain Y04AAS1).